The primary structure comprises 79 residues: Large ribosomal subunit protein bL28 (79 aa).

Belongs to the bacterial ribosomal protein bL28 family.

In Porphyromonas gingivalis (strain ATCC 33277 / DSM 20709 / CIP 103683 / JCM 12257 / NCTC 11834 / 2561), this protein is Large ribosomal subunit protein bL28.